Reading from the N-terminus, the 150-residue chain is MKIIVQRVKNARVTNDTIDNQINKGYCLLVGVGQNSTEEDVKVIARKIAHARLFEDENDKLNLNIQQVEGEILSVSQFTIYADVKKGNRPGFSNSKAPEQAKDLYQKFNKELEGYGLIVKTGEFGTHMNVEINNDGPVTLIYESQDGKII.

Positions 136 to 137 match the Gly-cisPro motif, important for rejection of L-amino acids motif; it reads GP.

The protein belongs to the DTD family. Homodimer.

The protein localises to the cytoplasm. It carries out the reaction glycyl-tRNA(Ala) + H2O = tRNA(Ala) + glycine + H(+). The catalysed reaction is a D-aminoacyl-tRNA + H2O = a tRNA + a D-alpha-amino acid + H(+). Its function is as follows. An aminoacyl-tRNA editing enzyme that deacylates mischarged D-aminoacyl-tRNAs. Also deacylates mischarged glycyl-tRNA(Ala), protecting cells against glycine mischarging by AlaRS. Acts via tRNA-based rather than protein-based catalysis; rejects L-amino acids rather than detecting D-amino acids in the active site. By recycling D-aminoacyl-tRNA to D-amino acids and free tRNA molecules, this enzyme counteracts the toxicity associated with the formation of D-aminoacyl-tRNA entities in vivo and helps enforce protein L-homochirality. The sequence is that of D-aminoacyl-tRNA deacylase from Staphylococcus epidermidis (strain ATCC 35984 / DSM 28319 / BCRC 17069 / CCUG 31568 / BM 3577 / RP62A).